The sequence spans 570 residues: MNVVFAVKQYISKMIEDSGPGMKVLLMDKETTGIVSMVYTQSEILQKEVYLFERIDSQNREIMKHLKAICFLRPTKENVDSLIQELRRPKYSIYFIYFSNVISKSDVKSLAEADEQEVVAEVQEFYGDYIAVNPHLFSLNILGCCQGRNWDPAQLSRTTQGLTALLLSLKKCPMIRYQLSSEAAKRLGECVKQVISKEYELFEFRRTEVPPLLLILDRCDDAITPLLNQWTYQAMVHELLGINNNRIDLSRVPGISKDLREVVLSAENDEFYANNMYLNFAEIGSNIKNLMEDFQKKRPKEQQKLESIADMKAFVENYPQFKKMSGTVSKHVTVVGELSRLVSERNLLEVSEVEQELACQNDHSSALQNVKRLLQNPKVTEFDAVRLVMLYALHYERHSSNSLPGLIVDLRSKGVAEKYRKLVSAVVEYGGKRVRGSDLFSPKDAVAITKQFLKGLKGVENVYTQHQPFLHETLDHLIKGKLKENLYPYLGPSTLRDRPQDIIVFVIGGATYEEALTVYNLNRTTPGVRIVLGGTTIHNTKSFLEEVLASGLHSRSRESSQATSRSASRR.

Serine 307 and serine 441 each carry phosphoserine.

Belongs to the STXBP/unc-18/SEC1 family. Interacts with STX6 and ZFYVE20. As to expression, ubiquitous; expression was highest in testis and in brain. Detected in every part of the brain.

It is found in the golgi apparatus membrane. The protein localises to the endosome membrane. Functionally, may play a role in vesicle-mediated protein trafficking from the Golgi stack through the trans-Golgi network. In Rattus norvegicus (Rat), this protein is Vacuolar protein sorting-associated protein 45 (Vps45).